Reading from the N-terminus, the 238-residue chain is 1-(5-phosphoribosyl)-5-[(5-phosphoribosylamino)methylideneamino] imidazole-4-carboxamide isomerase (238 aa).

Asp8 (proton acceptor) is an active-site residue. Asp130 (proton donor) is an active-site residue.

Belongs to the HisA/HisF family.

The protein resides in the cytoplasm. The enzyme catalyses 1-(5-phospho-beta-D-ribosyl)-5-[(5-phospho-beta-D-ribosylamino)methylideneamino]imidazole-4-carboxamide = 5-[(5-phospho-1-deoxy-D-ribulos-1-ylimino)methylamino]-1-(5-phospho-beta-D-ribosyl)imidazole-4-carboxamide. It participates in amino-acid biosynthesis; L-histidine biosynthesis; L-histidine from 5-phospho-alpha-D-ribose 1-diphosphate: step 4/9. The polypeptide is 1-(5-phosphoribosyl)-5-[(5-phosphoribosylamino)methylideneamino] imidazole-4-carboxamide isomerase (Methanococcus maripaludis (strain C5 / ATCC BAA-1333)).